The chain runs to 427 residues: Glutamyl-tRNA reductase (427 aa).

Residues 49–52 (TCNR), S109, 114–116 (EGQ), and Q120 each bind substrate. Residue C50 is the Nucleophile of the active site. 188–193 (GAGKMA) provides a ligand contact to NADP(+).

The protein belongs to the glutamyl-tRNA reductase family. In terms of assembly, homodimer.

The enzyme catalyses (S)-4-amino-5-oxopentanoate + tRNA(Glu) + NADP(+) = L-glutamyl-tRNA(Glu) + NADPH + H(+). The protein operates within porphyrin-containing compound metabolism; protoporphyrin-IX biosynthesis; 5-aminolevulinate from L-glutamyl-tRNA(Glu): step 1/2. It functions in the pathway porphyrin-containing compound metabolism; chlorophyll biosynthesis. Feedback inhibition by heme. Functionally, catalyzes the NADPH-dependent reduction of glutamyl-tRNA(Glu) to glutamate 1-semialdehyde (GSA). In Synechocystis sp. (strain ATCC 27184 / PCC 6803 / Kazusa), this protein is Glutamyl-tRNA reductase.